The following is a 61-amino-acid chain: Alpha-conotoxin-like Sm1.1 (61 aa).

Residues 1–16 (MFTVFLLVVLATTVVS) form the signal peptide. A propeptide spanning residues 17–43 (FPSDRASDGRDDEAKDERSDMHESGRK) is cleaved from the precursor. The tract at residues 19 to 46 (SDRASDGRDDEAKDERSDMHESGRKGRG) is disordered. Residues 21–42 (RASDGRDDEAKDERSDMHESGR) are compositionally biased toward basic and acidic residues. 2 disulfide bridges follow: C48–C53 and C49–C59. The residue at position 55 (P55) is a 4-hydroxyproline; partial. Position 59 is a cysteine amide (C59).

This sequence belongs to the conotoxin A superfamily. Expressed by the venom duct.

The protein resides in the secreted. In terms of biological role, alpha-conotoxins act on postsynaptic membranes, they bind to the nicotinic acetylcholine receptors (nAChR) and thus inhibit them. In Conus stercusmuscarum (Fly-specked cone), this protein is Alpha-conotoxin-like Sm1.1.